Here is a 391-residue protein sequence, read N- to C-terminus: Digeranylgeranylglycerophospholipid reductase (391 aa).

FAD contacts are provided by glycine 18, glutamate 37, cysteine 48, alanine 49, alanine 51, arginine 98, alanine 122, aspartate 279, glycine 291, and isoleucine 292.

Belongs to the geranylgeranyl reductase family. DGGGPL reductase subfamily. The cofactor is FAD.

It catalyses the reaction a 2,3-bis-O-phytanyl-sn-glycerol 1-phospholipid + 8 A = a 2,3-bis-O-(geranylgeranyl)-sn-glycerol 1-phospholipid + 8 AH2. The enzyme catalyses 2,3-bis-O-(phytanyl)-sn-glycerol 1-phosphate + 8 A = 2,3-bis-O-(geranylgeranyl)-sn-glycerol 1-phosphate + 8 AH2. The catalysed reaction is CDP-2,3-bis-O-(geranylgeranyl)-sn-glycerol + 8 AH2 = CDP-2,3-bis-O-(phytanyl)-sn-glycerol + 8 A. It carries out the reaction archaetidylserine + 8 AH2 = 2,3-bis-O-phytanyl-sn-glycero-3-phospho-L-serine + 8 A. Its pathway is membrane lipid metabolism; glycerophospholipid metabolism. Functionally, is involved in the reduction of 2,3-digeranylgeranylglycerophospholipids (unsaturated archaeols) into 2,3-diphytanylglycerophospholipids (saturated archaeols) in the biosynthesis of archaeal membrane lipids. Catalyzes the formation of archaetidic acid (2,3-di-O-phytanyl-sn-glyceryl phosphate) from 2,3-di-O-geranylgeranylglyceryl phosphate (DGGGP) via the hydrogenation of each double bond of the isoprenoid chains. Is also probably able to reduce double bonds of geranyl groups in CDP-2,3-bis-O-(geranylgeranyl)-sn-glycerol and archaetidylserine, thus acting at various stages in the biosynthesis of archaeal membrane lipids. This is Digeranylgeranylglycerophospholipid reductase from Methanocaldococcus jannaschii (strain ATCC 43067 / DSM 2661 / JAL-1 / JCM 10045 / NBRC 100440) (Methanococcus jannaschii).